Consider the following 584-residue polypeptide: Pescadillo homolog (584 aa).

The required for 28S ribosomal RNA processing stretch occupies residues 1–54; the sequence is MGGLEKKKYERGSATNYITRNKARKKLQLSLPDFRRLCILKGIYPHEPKHKKKV. The sufficient for nucleolar localization stretch occupies residues 1–257; that stretch reads MGGLEKKKYE…PKLEGQAQAE (257 aa). Lysine 98 is subject to N6-acetyllysine. The segment at 312 to 414 is sufficient for interaction with MAP1B; it reads RKKELEAQEK…LLLPVAEYFP (103 aa). The region spanning 321–414 is the BRCT domain; it reads KHKKLFEGLK…LLLPVAEYFP (94 aa). A disordered region spans residues 449–510; it reads DPGHLEEEEE…EEKKPQVMAG (62 aa). Positions 454–489 are enriched in acidic residues; sequence EEEEEEDEDDDNEGDVAAENEEEDVEVESEEEEEEE. Residues 496 to 505 are compositionally biased toward basic and acidic residues; it reads EQHRLEEKKP. Lysine 513 participates in a covalent cross-link: Glycyl lysine isopeptide (Lys-Gly) (interchain with G-Cter in SUMO1); alternate. A Glycyl lysine isopeptide (Lys-Gly) (interchain with G-Cter in SUMO2); alternate cross-link involves residue lysine 513. Residues 535-584 are required for 28S ribosomal RNA processing; that stretch reads MMKKREKYLYQKIMFGKRRKIREANKLAEKRKAHDDAVRSEKKAKRTRPV. The segment covering 560-575 has biased composition (basic and acidic residues); the sequence is KLAEKRKAHDDAVRSE. The tract at residues 560–584 is disordered; it reads KLAEKRKAHDDAVRSEKKAKRTRPV.

This sequence belongs to the pescadillo family. As to quaternary structure, component of the PeBoW complex, composed of BOP1, PES1 and WDR12. The complex is held together by BOP1, which interacts with PES1 via its N-terminal domain and with WDR12 via a high-affinity interaction between the seven-bladed beta-propeller domains of the 2 proteins. The PeBoW complex associates with the 66S pre-ribosome. The PeBoW complex also associates with DDX27, PES1 interacts directly with DDX27. Interacts with IRS1 and UBTF. May interact with MAP1B. Post-translationally, sumoylated. In terms of tissue distribution, ubiquitous. Highest levels appear to be found in tissues that contain a population of proliferating cells, such as ovary and testis. Also appears to be highly expressed in kidney and liver. In the brain expression is restricted to neural progenitor cells and postmitotic neurons. Highly expressed in malignant astrocytes.

The protein resides in the nucleus. It localises to the nucleolus. Its subcellular location is the nucleoplasm. The protein localises to the chromosome. In terms of biological role, component of the PeBoW complex, which is required for maturation of 28S and 5.8S ribosomal RNAs and formation of the 60S ribosome. This Mus musculus (Mouse) protein is Pescadillo homolog (Pes1).